Here is a 249-residue protein sequence, read N- to C-terminus: 3-deoxy-D-manno-octulosonic acid kinase (249 aa).

The active site involves Asp175.

It belongs to the protein kinase superfamily. KdkA/RfaP family.

The protein localises to the cell inner membrane. The enzyme catalyses an alpha-Kdo-(2-&gt;6)-lipid IVA + ATP = a 4-O-phospho-alpha-Kdo-(2-&gt;6)-lipid IVA + ADP + H(+). The protein operates within bacterial outer membrane biogenesis; LPS core biosynthesis. Its function is as follows. Catalyzes the ATP-dependent phosphorylation of the 3-deoxy-D-manno-octulosonic acid (Kdo) residue in Kdo-lipid IV(A) at the 4-OH position. The protein is 3-deoxy-D-manno-octulosonic acid kinase of Stenotrophomonas maltophilia (strain K279a).